The primary structure comprises 298 residues: Acetylglutamate kinase (298 aa).

Residues 69-70 (GG), Arg91, and Asn191 each bind substrate.

Belongs to the acetylglutamate kinase family. ArgB subfamily.

Its subcellular location is the cytoplasm. It carries out the reaction N-acetyl-L-glutamate + ATP = N-acetyl-L-glutamyl 5-phosphate + ADP. It functions in the pathway amino-acid biosynthesis; L-arginine biosynthesis; N(2)-acetyl-L-ornithine from L-glutamate: step 2/4. Its function is as follows. Catalyzes the ATP-dependent phosphorylation of N-acetyl-L-glutamate. This Neisseria meningitidis serogroup C / serotype 2a (strain ATCC 700532 / DSM 15464 / FAM18) protein is Acetylglutamate kinase.